The sequence spans 401 residues: 3-hydroxyisobutyryl-CoA hydrolase-like protein 1, mitochondrial (401 aa).

The transit peptide at 1 to 26 directs the protein to the mitochondrion; sequence MHNAKGLLGRIVRDKLWRFGYRRSLC.

It belongs to the enoyl-CoA hydratase/isomerase family.

It localises to the mitochondrion. The chain is 3-hydroxyisobutyryl-CoA hydrolase-like protein 1, mitochondrial from Arabidopsis thaliana (Mouse-ear cress).